Reading from the N-terminus, the 283-residue chain is Polyamine aminopropyltransferase (283 aa).

The PABS domain maps to 5-241 (NNWYIEHFER…GWWSVTLARK (237 aa)). Gln35 contributes to the S-methyl-5'-thioadenosine binding site. Spermidine contacts are provided by His66 and Asp90. Residues Asp110 and 141–142 (DG) each bind S-methyl-5'-thioadenosine. The Proton acceptor role is filled by Asp160. Position 160 to 163 (160 to 163 (DSTD)) interacts with spermidine. S-methyl-5'-thioadenosine is bound at residue Pro167.

This sequence belongs to the spermidine/spermine synthase family. In terms of assembly, homodimer or homotetramer.

It localises to the cytoplasm. The enzyme catalyses S-adenosyl 3-(methylsulfanyl)propylamine + putrescine = S-methyl-5'-thioadenosine + spermidine + H(+). It functions in the pathway amine and polyamine biosynthesis; spermidine biosynthesis; spermidine from putrescine: step 1/1. In terms of biological role, catalyzes the irreversible transfer of a propylamine group from the amino donor S-adenosylmethioninamine (decarboxy-AdoMet) to putrescine (1,4-diaminobutane) to yield spermidine. This is Polyamine aminopropyltransferase from Stenotrophomonas maltophilia (strain R551-3).